A 150-amino-acid polypeptide reads, in one-letter code: 3-hydroxyacyl-[acyl-carrier-protein] dehydratase FabZ (150 aa).

His54 is an active-site residue.

This sequence belongs to the thioester dehydratase family. FabZ subfamily.

The protein localises to the cytoplasm. It catalyses the reaction a (3R)-hydroxyacyl-[ACP] = a (2E)-enoyl-[ACP] + H2O. In terms of biological role, involved in unsaturated fatty acids biosynthesis. Catalyzes the dehydration of short chain beta-hydroxyacyl-ACPs and long chain saturated and unsaturated beta-hydroxyacyl-ACPs. The protein is 3-hydroxyacyl-[acyl-carrier-protein] dehydratase FabZ of Pseudoalteromonas translucida (strain TAC 125).